The sequence spans 461 residues: Tol-Pal system protein TolB 2 (461 aa).

The signal sequence occupies residues 1-20 (MKIRHLLLLAGLVSAPAIVA). The interval 28–47 (SSSAAQASGDDDGGLTGSVS) is disordered.

This sequence belongs to the TolB family. In terms of assembly, the Tol-Pal system is composed of five core proteins: the inner membrane proteins TolA, TolQ and TolR, the periplasmic protein TolB and the outer membrane protein Pal. They form a network linking the inner and outer membranes and the peptidoglycan layer.

The protein localises to the periplasm. Part of the Tol-Pal system, which plays a role in outer membrane invagination during cell division and is important for maintaining outer membrane integrity. This Novosphingobium aromaticivorans (strain ATCC 700278 / DSM 12444 / CCUG 56034 / CIP 105152 / NBRC 16084 / F199) protein is Tol-Pal system protein TolB 2.